Consider the following 193-residue polypeptide: MKDYSHLHIGVLALQGAVSEHLRQIEQLGANASAIKTVSELTALDGLVLPGGESTTIGRLMRQYGFIEAIQDVAKQGKGIFGTCAGMILLAKQLENDPTVHLGLMDICVQRNAFGRQVDSFQTALEIEGFATTFPAVFIRAPHIAQVNHEKVQCLATFQGHVVLAKQQNLLACAFHPELTTDLRVMQHFLEMC.

L-glutamine is bound at residue 52-54 (GES). Cysteine 84 functions as the Nucleophile in the catalytic mechanism. L-glutamine contacts are provided by residues arginine 111 and 139 to 140 (IR). Active-site charge relay system residues include histidine 176 and glutamate 178.

This sequence belongs to the glutaminase PdxT/SNO family. As to quaternary structure, in the presence of PdxS, forms a dodecamer of heterodimers. Only shows activity in the heterodimer.

It carries out the reaction aldehydo-D-ribose 5-phosphate + D-glyceraldehyde 3-phosphate + L-glutamine = pyridoxal 5'-phosphate + L-glutamate + phosphate + 3 H2O + H(+). The catalysed reaction is L-glutamine + H2O = L-glutamate + NH4(+). It participates in cofactor biosynthesis; pyridoxal 5'-phosphate biosynthesis. Its function is as follows. Catalyzes the hydrolysis of glutamine to glutamate and ammonia as part of the biosynthesis of pyridoxal 5'-phosphate. The resulting ammonia molecule is channeled to the active site of PdxS. In Pasteurella multocida (strain Pm70), this protein is Pyridoxal 5'-phosphate synthase subunit PdxT.